The chain runs to 91 residues: Sec-independent protein translocase protein TatA (91 aa).

The helical transmembrane segment at 1-21 threads the bilayer; the sequence is MGIFDWKHWIVILIVVVLVFG. Residues 42–91 form a disordered region; sequence AMHDDDKPAEQPAPQPQQAQPAPQGSPLNQPHTIDAQAHKVDEPIRKDQV. Low complexity predominate over residues 51–64; it reads EQPAPQPQQAQPAP. Basic and acidic residues predominate over residues 78 to 91; the sequence is QAHKVDEPIRKDQV.

It belongs to the TatA/E family. The Tat system comprises two distinct complexes: a TatABC complex, containing multiple copies of TatA, TatB and TatC subunits, and a separate TatA complex, containing only TatA subunits. Substrates initially bind to the TatABC complex, which probably triggers association of the separate TatA complex to form the active translocon.

The protein localises to the cell inner membrane. In terms of biological role, part of the twin-arginine translocation (Tat) system that transports large folded proteins containing a characteristic twin-arginine motif in their signal peptide across membranes. TatA could form the protein-conducting channel of the Tat system. The protein is Sec-independent protein translocase protein TatA of Pseudomonas syringae pv. tomato (strain ATCC BAA-871 / DC3000).